Here is a 361-residue protein sequence, read N- to C-terminus: Phenylalanine--tRNA ligase alpha subunit (361 aa).

Mg(2+) is bound at residue Glu-260.

Belongs to the class-II aminoacyl-tRNA synthetase family. Phe-tRNA synthetase alpha subunit type 1 subfamily. In terms of assembly, tetramer of two alpha and two beta subunits. The cofactor is Mg(2+).

It is found in the cytoplasm. It carries out the reaction tRNA(Phe) + L-phenylalanine + ATP = L-phenylalanyl-tRNA(Phe) + AMP + diphosphate + H(+). The polypeptide is Phenylalanine--tRNA ligase alpha subunit (Bartonella bacilliformis (strain ATCC 35685 / KC583 / Herrer 020/F12,63)).